The following is a 228-amino-acid chain: U1 small nuclear ribonucleoprotein C (228 aa).

A Matrin-type; degenerate zinc finger spans residues 11 to 43 (ATVDYCDIFLTHDSASVRKAHNTGWKHKMQVEH). The interval 83–127 (GQRGQPVGGPPRPPQPFHNGGRPGPPGRPPMGMFPPQRPMMPPPH) is disordered. Over residues 105–127 (PGPPGRPPMGMFPPQRPMMPPPH) the composition is skewed to pro residues.

The protein belongs to the U1 small nuclear ribonucleoprotein C family. In terms of assembly, U1 snRNP is composed of the 7 core Sm proteins B/B', D1, D2, D3, E, F and G that assemble in a heptameric protein ring on the Sm site of the small nuclear RNA to form the core snRNP, and at least 3 U1 snRNP-specific proteins U1-70K, U1-A and U1-C. U1-C interacts with U1 snRNA and the 5' splice-site region of the pre-mRNA.

It localises to the nucleus. Its function is as follows. Component of the spliceosomal U1 snRNP, which is essential for recognition of the pre-mRNA 5' splice-site and the subsequent assembly of the spliceosome. U1-C is directly involved in initial 5' splice-site recognition for both constitutive and regulated alternative splicing. The interaction with the 5' splice-site seems to precede base-pairing between the pre-mRNA and the U1 snRNA. Stimulates commitment or early (E) complex formation by stabilizing the base pairing of the 5' end of the U1 snRNA and the 5' splice-site region. The sequence is that of U1 small nuclear ribonucleoprotein C from Batrachochytrium dendrobatidis (strain JAM81 / FGSC 10211) (Frog chytrid fungus).